The primary structure comprises 141 residues: Endoribonuclease YbeY (141 aa).

Residues His-101, His-105, and His-111 each contribute to the Zn(2+) site.

The protein belongs to the endoribonuclease YbeY family. It depends on Zn(2+) as a cofactor.

It localises to the cytoplasm. In terms of biological role, single strand-specific metallo-endoribonuclease involved in late-stage 70S ribosome quality control and in maturation of the 3' terminus of the 16S rRNA. The chain is Endoribonuclease YbeY from Nitrosomonas eutropha (strain DSM 101675 / C91 / Nm57).